We begin with the raw amino-acid sequence, 664 residues long: DNA ligase (664 aa).

NAD(+) is bound by residues 30 to 34 (DFEFD), 79 to 80 (SL), and glutamate 109. Residue lysine 111 is the N6-AMP-lysine intermediate of the active site. Positions 132, 169, 284, and 308 each coordinate NAD(+). Zn(2+) is bound by residues cysteine 403, cysteine 406, cysteine 421, and cysteine 427. Residues 586–664 (NRSEKLKGLT…NEDAFLNMLE (79 aa)) enclose the BRCT domain.

Belongs to the NAD-dependent DNA ligase family. LigA subfamily. It depends on Mg(2+) as a cofactor. Requires Mn(2+) as cofactor.

It catalyses the reaction NAD(+) + (deoxyribonucleotide)n-3'-hydroxyl + 5'-phospho-(deoxyribonucleotide)m = (deoxyribonucleotide)n+m + AMP + beta-nicotinamide D-nucleotide.. In terms of biological role, DNA ligase that catalyzes the formation of phosphodiester linkages between 5'-phosphoryl and 3'-hydroxyl groups in double-stranded DNA using NAD as a coenzyme and as the energy source for the reaction. It is essential for DNA replication and repair of damaged DNA. The protein is DNA ligase of Parabacteroides distasonis (strain ATCC 8503 / DSM 20701 / CIP 104284 / JCM 5825 / NCTC 11152).